The chain runs to 140 residues: Iron sulfur cluster assembly protein 1 (140 aa).

The protein belongs to the NifU family. In terms of assembly, component of the core Fe-S cluster (ISC) assembly machinery. [2Fe-2S] cluster serves as cofactor.

It localises to the mitosome matrix. The protein operates within cofactor biosynthesis; iron-sulfur cluster biosynthesis. Its function is as follows. Scaffold protein for the de novo synthesis of iron-sulfur (Fe-S) clusters within mitosomes, which is required for maturation of both [2Fe-2S] and [4Fe-4S] proteins. First, a [2Fe-2S] cluster is transiently assembled on the scaffold protein ISU1. In a second step, the cluster is released from ISU1, transferred to a glutaredoxin, followed by the formation of [2Fe-2S] proteins, the synthesis of [4Fe-4S] clusters and their target-specific insertion into the recipient apoproteins. Cluster assembly on ISU1 depends on the function of the cysteine desulfurase complex NFS1-ISD11, which serves as the sulfur donor for cluster synthesis, the iron-binding protein frataxin as the putative iron donor, and the electron transfer chain comprised of ferredoxin reductase and ferredoxin, which receive their electrons from NADH. The chain is Iron sulfur cluster assembly protein 1 (ISU1) from Encephalitozoon cuniculi (strain GB-M1) (Microsporidian parasite).